The sequence spans 396 residues: Phosphoglycerate kinase (396 aa).

Substrate contacts are provided by residues 21 to 23, R36, 59 to 62, R118, and R151; these read DLN and HFGR. Residues K201, E323, and 353 to 356 each bind ATP; that span reads GGDT.

It belongs to the phosphoglycerate kinase family. As to quaternary structure, monomer.

Its subcellular location is the cytoplasm. The catalysed reaction is (2R)-3-phosphoglycerate + ATP = (2R)-3-phospho-glyceroyl phosphate + ADP. The protein operates within carbohydrate degradation; glycolysis; pyruvate from D-glyceraldehyde 3-phosphate: step 2/5. The chain is Phosphoglycerate kinase from Rhodospirillum centenum (strain ATCC 51521 / SW).